The following is a 713-amino-acid chain: Probable arginine--tRNA ligase, cytoplasmic (713 aa).

A disordered region spans residues 74-113; it reads KNKKNGVKATSTSSPSSSTSAPAEKKAKKDGKTGGAPPKQ. Low complexity predominate over residues 81–95; it reads KATSTSSPSSSTSAP. A compositionally biased stretch (basic and acidic residues) spans 96-105; the sequence is AEKKAKKDGK. L-arginine is bound by residues 252–254, His-263, Tyr-438, Asp-442, and Gln-466; that span reads SPN. A 'HIGH' region motif is present at residues 252–263; sequence SPNIAKEMHVGH. The interaction with tRNA stretch occupies residues 583-597; the sequence is NTAVYLLYAYTRIQS.

The protein belongs to the class-I aminoacyl-tRNA synthetase family.

Its subcellular location is the cytoplasm. It localises to the cytosol. The catalysed reaction is tRNA(Arg) + L-arginine + ATP = L-arginyl-tRNA(Arg) + AMP + diphosphate. In terms of biological role, forms part of a macromolecular complex that catalyzes the attachment of specific amino acids to cognate tRNAs during protein synthesis. This Caenorhabditis elegans protein is Probable arginine--tRNA ligase, cytoplasmic.